A 432-amino-acid polypeptide reads, in one-letter code: Adenylosuccinate synthetase (432 aa).

GTP contacts are provided by residues 13 to 19 (GDEGKGK) and 41 to 43 (GHT). The active-site Proton acceptor is the Asp14. Mg(2+) contacts are provided by Asp14 and Gly41. Residues 14 to 17 (DEGK), 39 to 42 (NAGH), Thr130, Arg144, Gln225, Thr240, and Arg304 each bind IMP. The active-site Proton donor is the His42. A substrate-binding site is contributed by 300–306 (ATTGRRR). Residues Arg306, 332-334 (KLD), and 415-417 (STG) contribute to the GTP site.

It belongs to the adenylosuccinate synthetase family. As to quaternary structure, homodimer. Requires Mg(2+) as cofactor.

The protein localises to the cytoplasm. It catalyses the reaction IMP + L-aspartate + GTP = N(6)-(1,2-dicarboxyethyl)-AMP + GDP + phosphate + 2 H(+). It functions in the pathway purine metabolism; AMP biosynthesis via de novo pathway; AMP from IMP: step 1/2. Its function is as follows. Plays an important role in the de novo pathway of purine nucleotide biosynthesis. Catalyzes the first committed step in the biosynthesis of AMP from IMP. The protein is Adenylosuccinate synthetase of Salmonella typhi.